The sequence spans 362 residues: Probable dual-specificity RNA methyltransferase RlmN (362 aa).

Residue Glu-105 is the Proton acceptor of the active site. The region spanning 111–344 (HEYGNSICVT…VTIRREQGHD (234 aa)) is the Radical SAM core domain. A disulfide bridge connects residues Cys-118 and Cys-349. Residues Cys-125, Cys-129, and Cys-132 each contribute to the [4Fe-4S] cluster site. S-adenosyl-L-methionine-binding positions include 175–176 (GE), Ser-207, 230–232 (SLH), and Asn-306. Cys-349 acts as the S-methylcysteine intermediate in catalysis.

The protein belongs to the radical SAM superfamily. RlmN family. The cofactor is [4Fe-4S] cluster.

The protein resides in the cytoplasm. It catalyses the reaction adenosine(2503) in 23S rRNA + 2 reduced [2Fe-2S]-[ferredoxin] + 2 S-adenosyl-L-methionine = 2-methyladenosine(2503) in 23S rRNA + 5'-deoxyadenosine + L-methionine + 2 oxidized [2Fe-2S]-[ferredoxin] + S-adenosyl-L-homocysteine. The catalysed reaction is adenosine(37) in tRNA + 2 reduced [2Fe-2S]-[ferredoxin] + 2 S-adenosyl-L-methionine = 2-methyladenosine(37) in tRNA + 5'-deoxyadenosine + L-methionine + 2 oxidized [2Fe-2S]-[ferredoxin] + S-adenosyl-L-homocysteine. Specifically methylates position 2 of adenine 2503 in 23S rRNA and position 2 of adenine 37 in tRNAs. In Bacillus anthracis (strain CDC 684 / NRRL 3495), this protein is Probable dual-specificity RNA methyltransferase RlmN.